Here is an 882-residue protein sequence, read N- to C-terminus: Putative HTH-type transcriptional regulator Mb0914c (882 aa).

The region spanning 814 to 879 (PARGWGSLTP…QLVDEAARRG (66 aa)) is the HTH luxR-type domain. The segment at residues 838-857 (NKDIAKRLFVSPRTVQTHLT) is a DNA-binding region (H-T-H motif).

The polypeptide is Putative HTH-type transcriptional regulator Mb0914c (Mycobacterium bovis (strain ATCC BAA-935 / AF2122/97)).